The sequence spans 251 residues: Triosephosphate isomerase (251 aa).

Substrate is bound at residue 9–11 (NWK). The active-site Electrophile is the H95. Residue E167 is the Proton acceptor of the active site. Substrate is bound by residues G173, S212, and 233-234 (GG).

Belongs to the triosephosphate isomerase family. In terms of assembly, homodimer.

The protein resides in the cytoplasm. It carries out the reaction D-glyceraldehyde 3-phosphate = dihydroxyacetone phosphate. It functions in the pathway carbohydrate biosynthesis; gluconeogenesis. Its pathway is carbohydrate degradation; glycolysis; D-glyceraldehyde 3-phosphate from glycerone phosphate: step 1/1. In terms of biological role, involved in the gluconeogenesis. Catalyzes stereospecifically the conversion of dihydroxyacetone phosphate (DHAP) to D-glyceraldehyde-3-phosphate (G3P). This chain is Triosephosphate isomerase, found in Pseudomonas aeruginosa (strain LESB58).